We begin with the raw amino-acid sequence, 403 residues long: Calcium-responsive transactivator (403 aa).

An N-terminal auto-inhibitory domain region spans residues 1–148; the sequence is MSVAFASARP…TLPTTTMSMA (148 aa). The SH2-binding signature appears at 50–53; it reads YQQI. Disordered regions lie at residues 72–111, 152–171, 224–303, and 318–403; these read QSLL…ALGS, HGSA…VPMQ, NQSS…RTFE, and SQQQ…NYQQ. 2 stretches are compositionally biased toward polar residues: residues 92–105 and 161–171; these read QTGP…QGNL and TVPSSQNVPMQ. The tract at residues 149 to 238 is methionine-rich intra-molecular domain; it reads VSTHGSAPGY…GSSMMGQRPL (90 aa). Positions 224-235 are enriched in low complexity; that stretch reads NQSSQGSSMMGQ. Residues 252–324 are MFD domain; that stretch reads YLGQEEYYSE…AQYSQQQTGY (73 aa). Residues 263–277 are compositionally biased toward polar residues; it reads YGHSQGSSEAMTPQY. The span at 286–296 shows a compositional bias: low complexity; that stretch reads YSYQQSSYGEQ. The tract at residues 341–403 is necessary for nuclear localization; that stretch reads NQQNYPGQQQ…EQGQYGNYQQ (63 aa). The SH2-binding motif lies at 360-363; sequence SQYS. The SH3-binding signature appears at 378–386; it reads TSQTTSTAQ. The SH2-binding signature appears at 398–401; the sequence is YGNY.

This sequence belongs to the SS18 family. Homodimer.

It localises to the nucleus. Its function is as follows. Transcriptional activator which may be required for calcium-dependent dendritic growth and branching in cortical neurons. In Xenopus laevis (African clawed frog), this protein is Calcium-responsive transactivator (ss18l1).